The sequence spans 156 residues: Tripartite terminase subunit 2 (156 aa).

The segment at 1–37 is disordered; sequence MYESENASEHHPELEDVFSENTGDSNPSMGSSDSTRS. Residues 19–37 show a composition bias toward polar residues; sequence SENTGDSNPSMGSSDSTRS.

It belongs to the herpesviridae TRM2 protein family. Associates with TRM1 and TRM3 to form the tripartite terminase complex.

It localises to the host nucleus. Component of the molecular motor that translocates viral genomic DNA in empty capsid during DNA packaging. Forms a tripartite terminase complex together with TRM1 and TRM3 in the host cytoplasm. Once the complex reaches the host nucleus, it interacts with the capsid portal vertex. This portal forms a ring in which genomic DNA is translocated into the capsid. The chain is Tripartite terminase subunit 2 from Varicella-zoster virus (strain Dumas) (HHV-3).